The following is a 74-amino-acid chain: Protein SlyX homolog (74 aa).

The protein belongs to the SlyX family.

The polypeptide is Protein SlyX homolog (Neisseria meningitidis serogroup A / serotype 4A (strain DSM 15465 / Z2491)).